We begin with the raw amino-acid sequence, 112 residues long: UPF0060 membrane protein Daro_2632 (112 aa).

A run of 4 helical transmembrane segments spans residues 7-27 (VLGL…LPWL), 34-54 (PVWL…LLTL), 59-79 (AGRI…IWLW), and 89-109 (WDLV…LQPA).

This sequence belongs to the UPF0060 family.

Its subcellular location is the cell inner membrane. This is UPF0060 membrane protein Daro_2632 from Dechloromonas aromatica (strain RCB).